The chain runs to 245 residues: tRNA pseudouridine synthase A (245 aa).

The active-site Nucleophile is Asp52. A substrate-binding site is contributed by Tyr111.

The protein belongs to the tRNA pseudouridine synthase TruA family. In terms of assembly, homodimer.

It carries out the reaction uridine(38/39/40) in tRNA = pseudouridine(38/39/40) in tRNA. Its function is as follows. Formation of pseudouridine at positions 38, 39 and 40 in the anticodon stem and loop of transfer RNAs. This is tRNA pseudouridine synthase A from Thermotoga neapolitana (strain ATCC 49049 / DSM 4359 / NBRC 107923 / NS-E).